A 422-amino-acid polypeptide reads, in one-letter code: L-cysteine:1D-myo-inositol 2-amino-2-deoxy-alpha-D-glucopyranoside ligase (422 aa).

Positions 1 to 34 are disordered; the sequence is MKSWSTPAPPTVPSRPDRLRLHDTATGRTRHPGN. Basic and acidic residues predominate over residues 15 to 25; sequence RPDRLRLHDTA. Residue cysteine 44 participates in Zn(2+) binding. Residues 44–47, threonine 59, and 82–84 contribute to the L-cysteinyl-5'-AMP site; these read CGIT and NVT. The short motif at 46–56 is the 'HIGH' region element; that stretch reads ITPYDATHLGH. Positions 196–201 match the 'ERGGDP' region motif; sequence ERGGDP. Position 237 (tryptophan 237) interacts with L-cysteinyl-5'-AMP. A Zn(2+)-binding site is contributed by cysteine 241. 259–261 contacts L-cysteinyl-5'-AMP; the sequence is GSD. Zn(2+) is bound at residue histidine 266. An L-cysteinyl-5'-AMP-binding site is contributed by valine 292. The short motif at 298-302 is the 'KMSKS' region element; sequence KMSKS.

This sequence belongs to the class-I aminoacyl-tRNA synthetase family. MshC subfamily. In terms of assembly, monomer. It depends on Zn(2+) as a cofactor.

The catalysed reaction is 1D-myo-inositol 2-amino-2-deoxy-alpha-D-glucopyranoside + L-cysteine + ATP = 1D-myo-inositol 2-(L-cysteinylamino)-2-deoxy-alpha-D-glucopyranoside + AMP + diphosphate + H(+). Functionally, catalyzes the ATP-dependent condensation of GlcN-Ins and L-cysteine to form L-Cys-GlcN-Ins. The sequence is that of L-cysteine:1D-myo-inositol 2-amino-2-deoxy-alpha-D-glucopyranoside ligase from Micrococcus luteus (strain ATCC 4698 / DSM 20030 / JCM 1464 / CCM 169 / CCUG 5858 / IAM 1056 / NBRC 3333 / NCIMB 9278 / NCTC 2665 / VKM Ac-2230) (Micrococcus lysodeikticus).